Reading from the N-terminus, the 219-residue chain is Small ribosomal subunit protein uS5 (219 aa).

Over residues 1-21 (MTDQNQKANQGNGLQTTNLQA) the composition is skewed to polar residues. The tract at residues 1 to 61 (MTDQNQKANQ…NQNRRFQKPA (61 aa)) is disordered. The segment covering 35-47 (GIKKAVSKKEGGG) has biased composition (basic and acidic residues). Residues 66 to 129 (FEERIVKLKR…KAAHNSLHTI (64 aa)) enclose the S5 DRBM domain.

The protein belongs to the universal ribosomal protein uS5 family. In terms of assembly, part of the 30S ribosomal subunit. Contacts proteins S4 and S8.

In terms of biological role, with S4 and S12 plays an important role in translational accuracy. Functionally, located at the back of the 30S subunit body where it stabilizes the conformation of the head with respect to the body. The sequence is that of Small ribosomal subunit protein uS5 from Mycoplasma pneumoniae (strain ATCC 29342 / M129 / Subtype 1) (Mycoplasmoides pneumoniae).